The primary structure comprises 1097 residues: DNA-directed RNA polymerase subunit beta (1097 aa).

Positions 1073–1097 (DVNPRRSTPSRPTYESLGVADYDED) are disordered.

It belongs to the RNA polymerase beta chain family. In cyanobacteria the RNAP catalytic core is composed of 2 alpha, 1 beta, 1 beta', 1 gamma and 1 omega subunit. When a sigma factor is associated with the core the holoenzyme is formed, which can initiate transcription.

The enzyme catalyses RNA(n) + a ribonucleoside 5'-triphosphate = RNA(n+1) + diphosphate. Functionally, DNA-dependent RNA polymerase catalyzes the transcription of DNA into RNA using the four ribonucleoside triphosphates as substrates. The sequence is that of DNA-directed RNA polymerase subunit beta from Synechococcus sp. (strain CC9311).